A 482-amino-acid polypeptide reads, in one-letter code: 2-succinylbenzoate--CoA ligase (482 aa).

Belongs to the ATP-dependent AMP-binding enzyme family. MenE subfamily.

It catalyses the reaction 2-succinylbenzoate + ATP + CoA = 2-succinylbenzoyl-CoA + AMP + diphosphate. Its pathway is quinol/quinone metabolism; 1,4-dihydroxy-2-naphthoate biosynthesis; 1,4-dihydroxy-2-naphthoate from chorismate: step 5/7. It participates in quinol/quinone metabolism; menaquinone biosynthesis. Its function is as follows. Converts 2-succinylbenzoate (OSB) to 2-succinylbenzoyl-CoA (OSB-CoA). This is 2-succinylbenzoate--CoA ligase from Bacillus anthracis (strain A0248).